The primary structure comprises 521 residues: Acetylcholine receptor subunit delta (521 aa).

Residues 1 to 21 form the signal peptide; that stretch reads MAWIWISLLLPILIYFPGCFS. Residues 22 to 247 are Extracellular-facing; it reads ESEEERLLNH…ITFYLIIERK (226 aa). N-linked (GlcNAc...) asparagine glycosylation is found at N53 and N164. An intrachain disulfide couples C151 to C165. 3 helical membrane-spanning segments follow: residues 248–272, 280–297, and 314–335; these read PLFY…VFYL, MTLA…LLLI, and YLMF…VLNL. The Cytoplasmic portion of the chain corresponds to 336–475; the sequence is HFRTPSTHAI…WYRIARTVDR (140 aa). The residue at position 394 (Y394) is a Phosphotyrosine; by Tyr-kinases. The chain crosses the membrane as a helical span at residues 476 to 494; that stretch reads LCLFLVTPVMIIGTLWIFL.

This sequence belongs to the ligand-gated ion channel (TC 1.A.9) family. Acetylcholine receptor (TC 1.A.9.1) subfamily. In terms of assembly, pentamer of two alpha chains, and one each of the beta, delta, and gamma (in immature muscle) or epsilon (in mature muscle) chains.

It localises to the postsynaptic cell membrane. The protein resides in the cell membrane. The catalysed reaction is K(+)(in) = K(+)(out). It carries out the reaction Na(+)(in) = Na(+)(out). In terms of biological role, after binding acetylcholine, the AChR responds by an extensive change in conformation that affects all subunits and leads to opening of an ion-conducting channel across the plasma membrane. This chain is Acetylcholine receptor subunit delta (chrnd), found in Xenopus laevis (African clawed frog).